We begin with the raw amino-acid sequence, 387 residues long: Cytochrome b (387 aa).

The helical transmembrane segment at 32-52 (LGSLLGLCLVIQIASGVFLAM) threads the bilayer. 2 residues coordinate heme b: His-82 and His-96. Helical transmembrane passes span 85 to 105 (GASF…YYGS), 116 to 136 (IGVV…CLVY), 151 to 171 (LSAI…GFSV), 179 to 199 (FFAL…MHLM), 225 to 245 (FIFK…LFVF), 289 to 309 (LGGV…PYTD), 324 to 344 (LAFY…QLHV), and 350 to 370 (QLGQ…VPVI). Heme b-binding residues include His-183 and His-197.

Belongs to the cytochrome b family. In terms of assembly, component of the ubiquinol-cytochrome c oxidoreductase (cytochrome b-c1 complex, complex III, CIII), a multisubunit enzyme composed of 10 subunits. The complex is composed of 3 respiratory subunits cytochrome b (COB), cytochrome c1 (CYT1) and Rieske protein (RIP1), 2 core protein subunits COR1 and QCR2, and 5 low-molecular weight protein subunits QCR6, QCR7, QCR8, QCR9 and QCR10. The complex exists as an obligatory dimer and forms supercomplexes (SCs) in the inner mitochondrial membrane with a monomer or a dimer of cytochrome c oxidase (complex IV, CIV), resulting in 2 different assemblies (supercomplexes III(2)IV and III(2)IV(2)). Heme b serves as cofactor.

The protein localises to the mitochondrion inner membrane. Its function is as follows. Component of the ubiquinol-cytochrome c oxidoreductase, a multisubunit transmembrane complex that is part of the mitochondrial electron transport chain which drives oxidative phosphorylation. The complex plays an important role in the uptake of multiple carbon sources present in different host niches. This is Cytochrome b from Candida albicans (strain SC5314 / ATCC MYA-2876) (Yeast).